Reading from the N-terminus, the 407-residue chain is uncharacterized protein (407 aa).

An EAL domain is found at 1-250 (MLDPLDILTN…LERDVLKQRL (250 aa)).

This is an uncharacterized protein from Bacillus subtilis (strain 168).